A 460-amino-acid polypeptide reads, in one-letter code: MLRTCYVLCSQAGPPSRGWQSLSFDGGAFHLKGTGELTRALLVLRLCAWPPLVTHGLLLQAWSRRLLGSRLSGAFLRASVYGQFVAGETAEEVKGCVQQLRTLSLRPLLAVPTEEEPDSAAKSGEAWYEGNLGAMLRCVDLSRGLLEPPSLAEASLMQLKVTALTSTRLCKELASWVRRPGASLELSPERLAEAMDSGQNLQVSCLNAEQNQHLRASLSRLHRVAQYARAQHVRLLVDAEYTSLNPALSLLVAALAVRWNSPGEGGPWVWNTYQACLKDTFERLGRDAEAAHRAGLAFGVKLVRGAYLDKERAVAQLHGMEDPTQPDYEATSQSYSRCLELMLTHVARHGPMCHLMVASHNEESVRQATKRMWELGIPLDGTVCFGQLLGMCDHVSLALGQAGYVVYKSIPYGSLEEVIPYLIRRAQENRSVLQGARREQELLSQELWRRLLPGCRRIPH.

Lys310 carries the N6-acetyllysine modification.

The protein belongs to the proline oxidase family. Requires FAD as cofactor.

The catalysed reaction is trans-4-hydroxy-L-proline + a quinone = (3R,5S)-1-pyrroline-3-hydroxy-5-carboxylate + a quinol + H(+). It carries out the reaction L-proline + a quinone = (S)-1-pyrroline-5-carboxylate + a quinol + H(+). Its activity is regulated as follows. Hydroproxyproline dehydrogenase activity is inhibited by THFA,(1R,3R)3-OH-cyclopentane-COOH and 5-OH-1H-pyrazole-3-COOH. Functionally, dehydrogenase that converts trans-4-L-hydroxyproline to delta-1-pyrroline-3-hydroxy-5-carboxylate (Hyp) using ubiquinone-10 as the terminal electron acceptor. Can also use proline as a substrate but with a very much lower efficiency. Does not react with other diastereomers of Hyp: trans-4-D-hydroxyproline and cis-4-L-hydroxyproline. Ubiquininone analogs such as menadione, duroquinone and ubiquinone-1 react more efficiently than oxygen as the terminal electron acceptor during catalysis. This Homo sapiens (Human) protein is Hydroxyproline dehydrogenase.